The following is a 349-amino-acid chain: Isopentenyl-diphosphate delta-isomerase (349 aa).

6 to 7 (RK) lines the substrate pocket. Residues 62-64 (AMT), Ser93, and Asn122 each bind FMN. Gln152 contacts substrate. Glu153 contacts Mg(2+). FMN-binding positions include Lys184, Thr214, 259 to 261 (GVR), and 280 to 281 (AG).

It belongs to the IPP isomerase type 2 family. In terms of assembly, homooctamer. Dimer of tetramers. It depends on FMN as a cofactor. NADPH serves as cofactor. Mg(2+) is required as a cofactor.

The protein localises to the cytoplasm. It catalyses the reaction isopentenyl diphosphate = dimethylallyl diphosphate. Functionally, involved in the biosynthesis of isoprenoids. Catalyzes the 1,3-allylic rearrangement of the homoallylic substrate isopentenyl (IPP) to its allylic isomer, dimethylallyl diphosphate (DMAPP). The sequence is that of Isopentenyl-diphosphate delta-isomerase from Geobacillus sp. (strain WCH70).